Consider the following 122-residue polypeptide: Small ribosomal subunit protein uS13 (122 aa).

The interval 92–122 is disordered; it reads HRKQLPVRGQRTHTNARTRKGKAKPIAGKKK.

The protein belongs to the universal ribosomal protein uS13 family. As to quaternary structure, part of the 30S ribosomal subunit. Forms a loose heterodimer with protein S19. Forms two bridges to the 50S subunit in the 70S ribosome.

Its function is as follows. Located at the top of the head of the 30S subunit, it contacts several helices of the 16S rRNA. In the 70S ribosome it contacts the 23S rRNA (bridge B1a) and protein L5 of the 50S subunit (bridge B1b), connecting the 2 subunits; these bridges are implicated in subunit movement. Contacts the tRNAs in the A and P-sites. The chain is Small ribosomal subunit protein uS13 from Methylobacterium radiotolerans (strain ATCC 27329 / DSM 1819 / JCM 2831 / NBRC 15690 / NCIMB 10815 / 0-1).